We begin with the raw amino-acid sequence, 304 residues long: Haloalkane dehalogenase (304 aa).

The AB hydrolase-1 domain maps to 42–154 (PIVFLHGNPT…DSVDLSPEFV (113 aa)). The active-site Nucleophile is the D114. The active-site Proton donor is the E138. The active-site Proton acceptor is H280.

Belongs to the haloalkane dehalogenase family. Type 2 subfamily. Monomer.

The enzyme catalyses 1-haloalkane + H2O = a halide anion + a primary alcohol + H(+). Functionally, catalyzes hydrolytic cleavage of carbon-halogen bonds in halogenated aliphatic compounds, leading to the formation of the corresponding primary alcohols, halide ions and protons. The polypeptide is Haloalkane dehalogenase (Agrobacterium fabrum (strain C58 / ATCC 33970) (Agrobacterium tumefaciens (strain C58))).